The following is a 353-amino-acid chain: ATP-dependent kinase YFH7 (353 aa).

31-39 (GSPGSGKST) contacts ATP.

This sequence belongs to the YFH7 family.

Functionally, ATP-dependent kinase that could be involved in endoplasmic reticulum membrane assembly. The sequence is that of ATP-dependent kinase YFH7 (YFH7) from Saccharomyces cerevisiae (strain ATCC 204508 / S288c) (Baker's yeast).